Consider the following 1093-residue polypeptide: Receptor-mediated endocytosis protein 6 (1093 aa).

The 234-residue stretch at 156-389 (LKIAQVVCNL…EMMDALLVEK (234 aa)) folds into the Ras-GAP domain. 2 disordered regions span residues 547–610 (DLEK…GGEQ) and 643–669 (RSGS…DVAT). Polar residues-rich tracts occupy residues 568–577 (IDFSSGSAET) and 584–598 (DSTS…STEE). One can recognise a VPS9 domain in the interval 955–1093 (HHRDKLLRGT…SAVEYIKTIL (139 aa)).

Belongs to the GAPVD1 family. Interacts with GDP-bound rab-5. Interacts with alpha-adaptin.

Its subcellular location is the membrane. It localises to the cytoplasmic vesicle. The protein localises to the clathrin-coated vesicle. Functionally, acts both as a GTPase-activating protein (GAP) and a guanine nucleotide exchange factor (GEF), and participates in endocytosis. Acts by regulating the activation of rab-5 by exchanging bound GDP for free GTP at clathrin coated pits. In Caenorhabditis elegans, this protein is Receptor-mediated endocytosis protein 6 (rme-6).